The sequence spans 347 residues: MNPLAQPVIYSTIFAGTLITALSSHWFFTWVGLEMNMLAFIPVLTKKMNPRSTEAAIKYFLTQATASMILLMAILFNNMLSGQWTMTNTTNQYSSLMIMMAMAMKLGMAPFHFWVPEVTQGTPLTSGLLLLTWQKLAPISIMYQISPSLNVSLLLTLSILSIMAGSWGGLNQTQLRKILAYSSITHMGWMMAVLPYNPNMTILNLTIYIILTTTAFLLLNLNSSTTTLLLSRTWNKLTWLTPLIPSTLLSLGGLPPLTGFLPKWAIIEEFTKNNSLIIPTIMATITLLNLYFYLRLIYSTSITLLPMSNNVKMKWQFEHTKPTPFLPTLIALTTLLLPISPFMLMIL.

Helical transmembrane passes span 13 to 33, 56 to 76, 96 to 116, 123 to 143, 149 to 169, 178 to 198, 201 to 221, 247 to 267, 274 to 294, and 326 to 346; these read IFAG…WVGL, AIKY…AILF, LMIM…FWVP, PLTS…SIMY, LNVS…SWGG, ILAY…PYNP, TILN…LLNL, TLLS…WAII, NSLI…YFYL, and LPTL…MLMI.

The protein belongs to the complex I subunit 2 family. Core subunit of respiratory chain NADH dehydrogenase (Complex I) which is composed of 45 different subunits. Interacts with TMEM242.

It localises to the mitochondrion inner membrane. It carries out the reaction a ubiquinone + NADH + 5 H(+)(in) = a ubiquinol + NAD(+) + 4 H(+)(out). Functionally, core subunit of the mitochondrial membrane respiratory chain NADH dehydrogenase (Complex I) which catalyzes electron transfer from NADH through the respiratory chain, using ubiquinone as an electron acceptor. Essential for the catalytic activity and assembly of complex I. The polypeptide is NADH-ubiquinone oxidoreductase chain 2 (Homo sapiens (Human)).